The sequence spans 158 residues: MHEGVQVSSKLEQLQALLAPVVVALGYECWGIEFSAQGRHSLLRVYIDKEGGVLVDDCAIVSRQISGVLDVEDPISVEYTLEVSSPGMERPLFTLEQFAKYVGEQVKIKLRSPFEGRRNFQGLLRGVEEQDVVVQVDDHEFLLPIDMIDKANIIPSFD.

This sequence belongs to the RimP family.

Its subcellular location is the cytoplasm. Functionally, required for maturation of 30S ribosomal subunits. The chain is Ribosome maturation factor RimP from Pseudomonas fluorescens (strain ATCC BAA-477 / NRRL B-23932 / Pf-5).